The chain runs to 167 residues: Ubiquitin-fold modifier-conjugating enzyme 1 (167 aa).

The active-site Glycyl thioester intermediate is the Cys116.

This sequence belongs to the ubiquitin-conjugating enzyme family. UFC1 subfamily. In terms of assembly, interacts with UBA5 (via C-terminus). Interacts with UFL1. Interacts with UFM1.

Functionally, E2-like enzyme which specifically catalyzes the second step in ufmylation. Accepts the ubiquitin-like modifier UFM1 from the E1 enzyme UBA5 and forms an intermediate with UFM1 via a thioester linkage. Ufmylation is involved in various processes, such as ribosome recycling, response to DNA damage, interferon response or reticulophagy (also called ER-phagy). The sequence is that of Ubiquitin-fold modifier-conjugating enzyme 1 from Salmo salar (Atlantic salmon).